A 766-amino-acid polypeptide reads, in one-letter code: Leucine-rich repeat and fibronectin type III domain-containing protein 1 (766 aa).

Positions 1–31 are cleaved as a signal peptide; that stretch reads MAPGPFSSGLFSPPPAALPFLLLLWAGASRG. The LRRNT domain occupies 32-65; sequence QPCPGRCICQNVAPTLTMLCAKTGLLFVPPAIDR. Topologically, residues 32–536 are extracellular; that stretch reads QPCPGRCICQ…LRAHFLGGTM (505 aa). LRR repeat units lie at residues 66–87, 90–111, 114–135, 138–159, 163–184, 187–208, and 211–232; these read RVVE…DFAN, SLVH…AFAD, ALRA…QLRG, NLRH…AFDA, TVED…AVGQ, NLNT…TFVQ, and KLVR…GLFL. N-linked (GlcNAc...) asparagine glycosylation occurs at asparagine 87. Residues 252-298 form the LRRCT domain; sequence NPLHCNCELLWLRRLTREDDLETCATPEHLTDRYFWSIPEEEFLCEP. One can recognise an Ig-like domain in the interval 299 to 386; it reads PLITRQAGGR…GEATAPVEVC (88 aa). A disulfide bridge connects residues cysteine 321 and cysteine 370. A glycan (N-linked (GlcNAc...) asparagine) is linked at asparagine 343. A disordered region spans residues 397 to 424; it reads PAAPPPLTEPGSSDIATPGRPGANDSTS. In terms of domain architecture, Fibronectin type-III spans 424–520; it reads SERRLVAAEL…GCVQFTTAGD (97 aa). The chain crosses the membrane as a helical span at residues 537 to 557; the sequence is IIAIGGVIVASVLVFIVLLMI. Topologically, residues 558–766 are cytoplasmic; it reads RYKVYGDGDS…STEWMLESTV (209 aa). Disordered regions lie at residues 568–601 and 645–742; these read RRIK…PPAP and LCLL…GEDG. Serine 713 is subject to Phosphoserine. The segment covering 714 to 727 has biased composition (basic residues); the sequence is YPRRARRTKRHRST. The short motif at 763–766 is the PDZ-binding element; the sequence is ESTV.

It belongs to the LRFN family. Can form heteromeric complexes with LRFN2, LRFN3, LRFN4 and LRFN5. Forms homomeric complexes, but not across cell junctions. Interacts with DLG4. Also interacts with DLG1, DLG2, and DLG3. Interacts with 2 AMPA receptor subunits GRIA1 and GRIA2 and NMDA receptor subunit GRIN1. Glycosylated. As to expression, predominantly expressed in the brain, with a weak, but broad expression in the cerebral cortex and diencephalic nuclei. Also detected in other parts of the central nervous system, including the olfactory bulb, pons, cerebellum, and medulla oblongata, as well as in the peripheral nervous system, such as the ganglia of cranial nerves and the dorsal root ganglion during gestation.

Its subcellular location is the membrane. The protein localises to the synapse. The protein resides in the postsynaptic density membrane. Promotes neurite outgrowth in hippocampal neurons. Involved in the regulation and maintenance of excitatory synapses. Induces the clustering of excitatory postsynaptic proteins, including DLG4, DLGAP1, GRIA1 and GRIN1. The chain is Leucine-rich repeat and fibronectin type III domain-containing protein 1 (Lrfn1) from Mus musculus (Mouse).